A 786-amino-acid chain; its full sequence is Wall-associated receptor kinase-like 17 (786 aa).

Positions 1-30 (MSYKNTNNSHLILFKLLLLLILYSADLTAS) are cleaved as a signal peptide. Residues 31–369 (SSCRSECGGC…YRCVGDKTKA (339 aa)) are Extracellular-facing. N-linked (GlcNAc...) asparagine glycans are attached at residues Asn-69, Asn-122, Asn-160, Asn-165, and Asn-274. The atypical EGF-like stretch occupies residues 301-362 (CICDYTMSII…CVNFEGGYRC (62 aa)). 3 disulfide bridges follow: Cys-303–Cys-318, Cys-340–Cys-353, and Cys-347–Cys-362. Residues 370-390 (IMIGAGTGFGVLVLVGGVWWL) form a helical membrane-spanning segment. Topologically, residues 391–786 (RKFLVKRRMA…VEPLNPLLTW (396 aa)) are cytoplasmic. A Phosphothreonine modification is found at Thr-433. Residues 444–719 (FSENRVLGHG…REVFTELERI (276 aa)) enclose the Protein kinase domain. Residues 450 to 458 (LGHGGQGTV) and Lys-472 contribute to the ATP site. Tyr-517 bears the Phosphotyrosine mark. The active-site Proton acceptor is the Asp-570. Thr-604 and Thr-609 each carry phosphothreonine. The residue at position 617 (Tyr-617) is a Phosphotyrosine. A compositionally biased stretch (low complexity) spans 766-775 (SSIVASPPSS). The interval 766–786 (SSIVASPPSSDVEPLNPLLTW) is disordered.

It belongs to the protein kinase superfamily. Ser/Thr protein kinase family.

The protein resides in the membrane. It catalyses the reaction L-seryl-[protein] + ATP = O-phospho-L-seryl-[protein] + ADP + H(+). The catalysed reaction is L-threonyl-[protein] + ATP = O-phospho-L-threonyl-[protein] + ADP + H(+). In terms of biological role, serine/threonine-protein kinase that may function as a signaling receptor of extracellular matrix component. The protein is Wall-associated receptor kinase-like 17 (WAKL17) of Arabidopsis thaliana (Mouse-ear cress).